The following is a 337-amino-acid chain: tRNA N6-adenosine threonylcarbamoyltransferase (337 aa).

2 residues coordinate Fe cation: His111 and His115. Substrate is bound by residues 134–138 (LVSGG), Asp167, Gly180, and Asn272. Residue Asp300 participates in Fe cation binding.

The protein belongs to the KAE1 / TsaD family. Fe(2+) is required as a cofactor.

It is found in the cytoplasm. The catalysed reaction is L-threonylcarbamoyladenylate + adenosine(37) in tRNA = N(6)-L-threonylcarbamoyladenosine(37) in tRNA + AMP + H(+). In terms of biological role, required for the formation of a threonylcarbamoyl group on adenosine at position 37 (t(6)A37) in tRNAs that read codons beginning with adenine. Is involved in the transfer of the threonylcarbamoyl moiety of threonylcarbamoyl-AMP (TC-AMP) to the N6 group of A37, together with TsaE and TsaB. TsaD likely plays a direct catalytic role in this reaction. The polypeptide is tRNA N6-adenosine threonylcarbamoyltransferase (Enterobacter sp. (strain 638)).